Reading from the N-terminus, the 273-residue chain is NH(3)-dependent NAD(+) synthetase (273 aa).

ATP is bound at residue 46–53 (GISGGQDS). Asp52 serves as a coordination point for Mg(2+). Arg139 provides a ligand contact to deamido-NAD(+). Thr159 contacts ATP. Glu164 is a binding site for Mg(2+). Lys172 and Asp179 together coordinate deamido-NAD(+). ATP-binding residues include Lys188 and Thr210. 259-260 (HK) lines the deamido-NAD(+) pocket.

This sequence belongs to the NAD synthetase family. In terms of assembly, homodimer.

The enzyme catalyses deamido-NAD(+) + NH4(+) + ATP = AMP + diphosphate + NAD(+) + H(+). It participates in cofactor biosynthesis; NAD(+) biosynthesis; NAD(+) from deamido-NAD(+) (ammonia route): step 1/1. In terms of biological role, catalyzes the ATP-dependent amidation of deamido-NAD to form NAD. Uses ammonia as a nitrogen source. The chain is NH(3)-dependent NAD(+) synthetase from Streptococcus thermophilus (strain ATCC BAA-250 / LMG 18311).